Here is a 78-residue protein sequence, read N- to C-terminus: Short neurotoxin SNTX11 (78 aa).

The N-terminal stretch at 1–21 (MKTLLLTFLVVTIVCLDLGYT) is a signal peptide. 4 cysteine pairs are disulfide-bonded: Cys24–Cys40, Cys33–Cys58, Cys62–Cys70, and Cys71–Cys76.

It belongs to the three-finger toxin family. Short-chain subfamily. Expressed by the venom gland.

It is found in the secreted. Its function is as follows. This three-finger toxin binds and inhibits the nicotinic acetylcholine receptor (nAChR). This is Short neurotoxin SNTX11 from Ophiophagus hannah (King cobra).